Consider the following 540-residue polypeptide: MSLESLTVQTKYGPVRGKRNVSLLGQEYVSFQGIPYARAPEGELRFKAPVPPQKWTETLDCTQQCEPCYHFDRRLQKIVGCEDSLKINVFAKEINPSTPLPVMLYIYGGGFTEGTSGTELYGPDFLVQKDIVLVSFNYRIGALGFLCCQSEQDGVPGNAGLKDQNLAIRWVLENIAAFGGDPKRVTLAGHSAGAASVQYHLISDASKDLFQRRIVMSGSTYSSWSLTRQRNWVEKLAKAIGWDGQGGESGALRFLRRAKPEDIVAHQEKLLTDQDMQDDIFTPFGPTVEPYLTEQCIIPKAPFEMARTAWGDKIDIMIGGTSEEGLLLLQKIKLHPELLSHPHLFLGNVPPNLKISMEKRIEFAAKLKQRYYPDSIPSMENNLGYVHMMSDRVFWHGLHRTILARAARSRARTFVYRICLDSEFYNHYRIMMIDPKLRGTAHADELSYLFSNFTQQVPGKETFEYRGLQTLVDVFSAFVINGDPNCGMTAKGGVVFEPNAQTKPTFKCLNIANDGVAFVDYPDADRLDMWDAMYVNDELF.

A disulfide bond links C68 and C81. The Acyl-ester intermediate role is filled by S191. Catalysis depends on charge relay system residues E324 and H442. N-linked (GlcNAc...) asparagine glycosylation occurs at N452.

The protein belongs to the type-B carboxylesterase/lipase family.

The enzyme catalyses a carboxylic ester + H2O = an alcohol + a carboxylate + H(+). In terms of biological role, overproduction of nonspecific esterases is a common mechanism of resistance to organophosphate insecticides. The sequence is that of Esterase B1 (B1) from Culex pipiens (House mosquito).